Here is a 380-residue protein sequence, read N- to C-terminus: Endopolygalacturonase AN8327 (380 aa).

The signal sequence occupies residues 1-19; sequence MFYALGPLALFAFATEVMA. Positions 20–35 are excised as a propeptide; it reads TPVAYPMTTASPTLAK. An intrachain disulfide couples cysteine 39 to cysteine 57. PbH1 repeat units lie at residues 147-169, 170-200, 201-222, 223-243, 252-273, 281-303, and 315-338; these read LTDSTIQNLYIENTPVQAVSING, CDGLTITDMTIDNSAGDDAGGHNTDGFDIGE, SSNVVITGAKVYNQDDCVAVNS, GTSITFSGGTCSGGHGLSIGS, VDTVTFKDSTVSNSVNGIRIKA, IKGVTYSGISLESISDYGILIEQ, and TSGIPITDLTIENISGSGAVDSDG. Catalysis depends on aspartate 215, which acts as the Proton donor. The cysteines at positions 217 and 233 are disulfide-linked. Histidine 237 is a catalytic residue. N-linked (GlcNAc...) asparagine glycosylation occurs at asparagine 327. A disulfide bridge links cysteine 345 with cysteine 350. Asparagine 352 is a glycosylation site (N-linked (GlcNAc...) asparagine). Cysteine 369 and cysteine 378 form a disulfide bridge.

The protein belongs to the glycosyl hydrolase 28 family.

It is found in the secreted. The catalysed reaction is (1,4-alpha-D-galacturonosyl)n+m + H2O = (1,4-alpha-D-galacturonosyl)n + (1,4-alpha-D-galacturonosyl)m.. Its function is as follows. Involved in maceration and soft-rotting of plant tissue. Hydrolyzes the 1,4-alpha glycosidic bonds of de-esterified pectate in the smooth region of the plant cell wall. The polypeptide is Endopolygalacturonase AN8327 (Emericella nidulans (strain FGSC A4 / ATCC 38163 / CBS 112.46 / NRRL 194 / M139) (Aspergillus nidulans)).